The sequence spans 554 residues: Thermosome subunit alpha (554 aa).

Positions 530 to 554 (PKKKEKKGKTGEEEEEEGGGSKFEF) are disordered.

The protein belongs to the TCP-1 chaperonin family. As to quaternary structure, forms a Heterooligomeric complex of two stacked eight-membered rings.

Functionally, molecular chaperone; binds unfolded polypeptides in vitro, and has a weak ATPase activity. This chain is Thermosome subunit alpha (thsA), found in Aeropyrum pernix (strain ATCC 700893 / DSM 11879 / JCM 9820 / NBRC 100138 / K1).